Reading from the N-terminus, the 228-residue chain is Protein Iojap, chloroplastic (228 aa).

The tract at residues 1–54 (MGGTSAAVPSHGLACAPPAAVTLNPRARRRRASSGSGGHRSSPQQPLRSDLLPP) is disordered. The transit peptide at 1 to 62 (MGGTSAAVPS…PPATVACRAR (62 aa)) directs the protein to the chloroplast.

Belongs to the Iojap/RsfS family. In terms of assembly, interacts with chloroplast ribosomal protein uL14c (rpl14).

It localises to the plastid. It is found in the chloroplast. Functionally, may be a ribosome silencing factor (Potential). Involved in plastid biogenesis. Plastids affected by a mutation in Iojap lose the ability to perform translation and lack plastid ribosomes. The chain is Protein Iojap, chloroplastic (Ij) from Zea mays (Maize).